Consider the following 876-residue polypeptide: ATPase WRNIP1 (876 aa).

Composition is skewed to low complexity over residues 56–85 (NKSN…TPTK) and 104–175 (NNNN…INNN). Positions 56–175 (NKSNGNNSIN…NNNNNNINNN (120 aa)) are disordered. 240-246 (PGCGKTT) is an ATP binding site. 3 disordered regions span residues 621 to 647 (KDRQ…PQQQ), 714 to 737 (INNK…LNPT), and 833 to 876 (ETKA…SLDF). Composition is skewed to low complexity over residues 626–647 (SQDQ…PQQQ) and 714–731 (INNK…VNNS). The span at 835-849 (KAISSTDTKESVSIN) shows a compositional bias: polar residues. Basic and acidic residues predominate over residues 850–863 (DSDKDLTTTHKNEQ).

This sequence belongs to the AAA ATPase family. RarA/MGS1/WRNIP1 subfamily.

It localises to the nucleus. The catalysed reaction is ATP + H2O = ADP + phosphate + H(+). Functions as a modulator for initiation or reinitiation events during DNA polymerase delta-mediated DNA synthesis. Has an intrinsic ATPase activity that functions as a sensor of DNA damage or of arrested replication forks and regulates the extent of DNA synthesis. In Dictyostelium discoideum (Social amoeba), this protein is ATPase WRNIP1.